The primary structure comprises 47 residues: Delta-actitoxin-Axm1e (47 aa).

3 disulfides stabilise this stretch: C4–C44, C6–C34, and C27–C45.

Belongs to the sea anemone sodium channel inhibitory toxin family. Type I subfamily.

The protein localises to the secreted. The protein resides in the nematocyst. In terms of biological role, binds specifically to voltage-gated sodium channels (Nav), thereby delaying their inactivation. This toxin is active on a variety of voltage-gated sodium channels (Nav1.1/SCN1A, Nav1.2/SCN2A, Nav1.3/SCN3A, Nav1.4/SCN4A, Nav1.5/SCN5A and Nav1.6/SCN8A). In Anthopleura xanthogrammica (Giant green sea anemone), this protein is Delta-actitoxin-Axm1e.